The following is a 176-amino-acid chain: MKGFGLAFGLFSAVGFLLWTPLTGLKTLHLGSCVITANLQAIQKEFSEIRDSVQAEDTNIDIRILRTTESLKDIKSLDRCCFLRHLVRFYLDRVFKVYQTPDHHTLRKISSLANSFLIIKKDLSVCHSHMACHCGEEAMEKYNQILSHFIELELQAAVVKALGELGILLRWMEEML.

The N-terminal stretch at 1-24 is a signal peptide; that stretch reads MKGFGLAFGLFSAVGFLLWTPLTG. 3 cysteine pairs are disulfide-bonded: Cys-33–Cys-126, Cys-80–Cys-132, and Cys-81–Cys-134.

This sequence belongs to the IL-10 family. In terms of assembly, forms a 1:1:1 heterotrimeric complex with its primary high-affinity heterodimeric receptor IL20RA/IL20RB.

It localises to the secreted. In terms of biological role, pro-inflammatory and angiogenic cytokine mainly secreted by monocytes and skin keratinocytes that plays crucial roles in immune responses, regulation of inflammatory responses, hemopoiesis, as well as epidermal cell and keratinocyte differentiation. Enhances tissue remodeling and wound-healing activities and restores the homeostasis of epithelial layers during infection and inflammatory responses to maintain tissue integrity. Affects multiple actin-mediated functions in activated neutrophils leading to inhibition of phagocytosis, granule exocytosis, and migration. Exert its effects via the type I IL-20 receptor complex consisting of IL20RA and IL20RB. Alternatively, can mediate its activity through a second receptor complex called type II IL-20 receptor complex composed of IL22RA1 and IL20RB. Acts as an arteriogenic and vascular remodeling factory by activating a range of signaling processes including phosphorylations of JAK2 and STAT5 as well as activation of the serine and threonine kinases AKT and ERK1/2. Alternatively, can activate STAT3 phosphorylation and transcriptional activity in a JAK2, ERK1/2 and p38 MAPK-dependent manner in keratinocytes. The protein is Interleukin-20 (Il20) of Mus musculus (Mouse).